The following is an 849-amino-acid chain: Rho guanine nucleotide exchange factor 15 (849 aa).

Disordered stretches follow at residues 1–146 (MSAQ…ASAP), 159–202 (GAEG…NGTP), and 277–308 (LPPL…LPSE). Over residues 18-31 (RIIRPRPPSRHRAP) the composition is skewed to basic residues. The segment covering 48–59 (QISNDASASVCT) has biased composition (polar residues). Positions 65 to 110 (PPTASLKPPALLPPSVSRTSLDSQTSPDSPSSTPSPSPVSRRSISP) are enriched in low complexity. Phosphoserine occurs at positions 107 and 109. A compositionally biased stretch (pro residues) spans 111–123 (EPAPCSPVPPPKP). Residues 164–180 (AQSSDSLERCSQGSTEV) are compositionally biased toward polar residues. Tyr361 carries the phosphotyrosine; by EPHB2 modification. The DH domain maps to 425–609 (RMQESLFEVV…SKIIERCSAE (185 aa)). Polar residues-rich tracts occupy residues 771-786 (CSEP…QSLE) and 840-849 (SSGTPDTPQP). Disordered stretches follow at residues 771 to 803 (CSEP…GWLK) and 819 to 849 (GEHE…TPQP).

In terms of assembly, interacts with EPHA4. Interacts with EPHB2. Post-translationally, phosphorylated on tyrosine residues upon EFNA1 stimulation. EPHB2-dependent phosphorylation at Tyr-361 triggers UBE3A-mediated ubiquitination. Ubiquitinated; UBE3A-mediated ubiquitination and degradation by the proteasome promotes EFNB1-dependent synapse formation. In terms of tissue distribution, at P12, expressed is detected in the CA1 region and the dentate gyrus of the hippocampus.

Its subcellular location is the cell projection. It localises to the dendrite. Its function is as follows. Specific GEF for RhoA activation. Does not activate RAC1 or CDC42. Regulates vascular smooth muscle contractility. Negatively regulates excitatory synapse development by suppressing the synapse-promoting activity of EPHB2. In Mus musculus (Mouse), this protein is Rho guanine nucleotide exchange factor 15 (Arhgef15).